We begin with the raw amino-acid sequence, 128 residues long: MIVRTLDECRNSERRVVADNWESVRMLLKDDNMGFSFHITTIYEGTETHIHYQNHLESVFCMSGEGEIEVVGGETYPIKPGTLYILDKHDEHYLRAYKNKEMVMACVFNPPITGAEVHDENGVYPLVD.

This sequence belongs to the ectoine synthase family.

It carries out the reaction (2S)-4-acetamido-2-aminobutanoate = L-ectoine + H2O. The protein operates within amine and polyamine biosynthesis; ectoine biosynthesis; L-ectoine from L-aspartate 4-semialdehyde: step 3/3. Its function is as follows. Catalyzes the circularization of gamma-N-acetyl-alpha,gamma-diaminobutyric acid (ADABA) to ectoine (1,4,5,6-tetrahydro-2-methyl-4-pyrimidine carboxylic acid), which is an excellent osmoprotectant. This chain is L-ectoine synthase, found in Vibrio parahaemolyticus serotype O3:K6 (strain RIMD 2210633).